Here is a 232-residue protein sequence, read N- to C-terminus: CMP-N,N'-diacetyllegionaminic acid synthase (232 aa).

Belongs to the CMP-NeuNAc synthase family.

It carries out the reaction N,N-diacetyllegionaminate + CTP = CMP-N,N-diacetyllegionaminate + diphosphate. In terms of biological role, involved in biosynthesis of legionaminic acid (5,7-diamino-3,5,7,9-tetradeoxy-D-glycero-D-galacto-non-2-ulosonic acid)(Leg), a sialic acid-like derivative that is incorporated into virulence-associated cell surface glycoconjugates such as lipopolysaccharide (LPS) which could be a key determinant in the ability of L.pneumophila to inhibit the fusion of phagosomes with lysosomes. LPS contains a majority alpha2,4-linked homomer of legionaminic acid. Catalyzes the conversion of N,N'-diacetyllegionaminic acid (Leg5Ac7Ac) and CTP into CMP-N,N'-diacetyllegionaminic acid (CMP-Leg5Ac7Ac). In Legionella pneumophila subsp. pneumophila (strain Philadelphia 1 / ATCC 33152 / DSM 7513), this protein is CMP-N,N'-diacetyllegionaminic acid synthase (neuA).